A 681-amino-acid chain; its full sequence is DNA ligase (681 aa).

Residues 33 to 37, 83 to 84, and glutamate 113 contribute to the NAD(+) site; these read DGQFD and SL. Lysine 115 acts as the N6-AMP-lysine intermediate in catalysis. 4 residues coordinate NAD(+): arginine 136, glutamate 176, lysine 292, and lysine 316. Positions 410, 413, 429, and 435 each coordinate Zn(2+). Positions 599 to 681 constitute a BRCT domain; that stretch reads SIPRNLEGLS…RALLADGPPA (83 aa).

It belongs to the NAD-dependent DNA ligase family. LigA subfamily. Mg(2+) is required as a cofactor. Requires Mn(2+) as cofactor.

It carries out the reaction NAD(+) + (deoxyribonucleotide)n-3'-hydroxyl + 5'-phospho-(deoxyribonucleotide)m = (deoxyribonucleotide)n+m + AMP + beta-nicotinamide D-nucleotide.. Functionally, DNA ligase that catalyzes the formation of phosphodiester linkages between 5'-phosphoryl and 3'-hydroxyl groups in double-stranded DNA using NAD as a coenzyme and as the energy source for the reaction. It is essential for DNA replication and repair of damaged DNA. This Mycobacteroides abscessus (strain ATCC 19977 / DSM 44196 / CCUG 20993 / CIP 104536 / JCM 13569 / NCTC 13031 / TMC 1543 / L948) (Mycobacterium abscessus) protein is DNA ligase.